Here is a 255-residue protein sequence, read N- to C-terminus: Phosphatidylglycerol--prolipoprotein diacylglyceryl transferase (255 aa).

3 helical membrane passes run 15–35 (WYGI…NLNC), 46–66 (IDVF…YYVV), and 84–104 (LGGL…YIVS). Arg-130 contributes to the a 1,2-diacyl-sn-glycero-3-phospho-(1'-sn-glycerol) binding site. Helical transmembrane passes span 169–189 (PTFL…VYIF), 196–216 (GTVI…IEGL), and 228–248 (VAQL…VYLK).

The protein belongs to the Lgt family.

The protein resides in the cell membrane. It carries out the reaction L-cysteinyl-[prolipoprotein] + a 1,2-diacyl-sn-glycero-3-phospho-(1'-sn-glycerol) = an S-1,2-diacyl-sn-glyceryl-L-cysteinyl-[prolipoprotein] + sn-glycerol 1-phosphate + H(+). Its pathway is protein modification; lipoprotein biosynthesis (diacylglyceryl transfer). Its function is as follows. Catalyzes the transfer of the diacylglyceryl group from phosphatidylglycerol to the sulfhydryl group of the N-terminal cysteine of a prolipoprotein, the first step in the formation of mature lipoproteins. The protein is Phosphatidylglycerol--prolipoprotein diacylglyceryl transferase of Clostridium kluyveri (strain NBRC 12016).